The sequence spans 463 residues: NADH dehydrogenase [ubiquinone] iron-sulfur protein 2, mitochondrial (463 aa).

The N-terminal 33 residues, 1–33 (MAALRALCGFRGVAAQVLRPGAGVRLPIQPSRG), are a transit peptide targeting the mitochondrion. Position 62 is an N6-acetyllysine (Lys-62). Arg-118 is subject to Symmetric dimethylarginine. [4Fe-4S] cluster is bound by residues Cys-326, Cys-332, and Cys-347.

Belongs to the complex I 49 kDa subunit family. Core subunit of respiratory chain NADH dehydrogenase (Complex I) which is composed of 45 different subunits. Component of the iron-sulfur (IP) fragment of the enzyme. Interacts with NDUFAF3. Interacts with NDUFAF7. Interacts with CERS2. The cofactor is [4Fe-4S] cluster. Dimethylation at Arg-118 by NDUFAF7 takes place after NDUFS2 assembles into the complex I, leading to stabilize the early intermediate complex.

The protein resides in the mitochondrion inner membrane. It catalyses the reaction a ubiquinone + NADH + 5 H(+)(in) = a ubiquinol + NAD(+) + 4 H(+)(out). Its function is as follows. Core subunit of the mitochondrial membrane respiratory chain NADH dehydrogenase (Complex I) which catalyzes electron transfer from NADH through the respiratory chain, using ubiquinone as an electron acceptor. Essential for the catalytic activity and assembly of complex I. Redox-sensitive, critical component of the oxygen-sensing pathway in the pulmonary vasculature which plays a key role in acute pulmonary oxygen-sensing and hypoxic pulmonary vasoconstriction. Plays an important role in carotid body sensing of hypoxia. Essential for glia-like neural stem and progenitor cell proliferation, differentiation and subsequent oligodendrocyte or neuronal maturation. The protein is NADH dehydrogenase [ubiquinone] iron-sulfur protein 2, mitochondrial (NDUFS2) of Pan troglodytes (Chimpanzee).